Reading from the N-terminus, the 440-residue chain is Lipopolysaccharide-processing protein LpsZ (440 aa).

It to E.coli capsule polysaccharide export protein KpsC.

It is found in the cytoplasm. Functionally, involved in the invasion of nitrogen fixation nodules. May be involved in the biosynthesis of lipopolysaccharides as an enzyme or a regulatory protein. In Rhizobium meliloti (Ensifer meliloti), this protein is Lipopolysaccharide-processing protein LpsZ (lpsZ).